Here is a 431-residue protein sequence, read N- to C-terminus: Adenylosuccinate synthetase (431 aa).

GTP is bound by residues 13 to 19 (GDEGKGK) and 41 to 43 (GHT). Asp-14 functions as the Proton acceptor in the catalytic mechanism. Mg(2+) is bound by residues Asp-14 and Gly-41. IMP is bound by residues 14–17 (DEGK), 39–42 (NAGH), Thr-130, Arg-144, Gln-225, Thr-240, and Arg-304. His-42 (proton donor) is an active-site residue. 300 to 306 (ATTGRAR) is a substrate binding site. Residues Arg-306, 332-334 (KLD), and 415-417 (STG) contribute to the GTP site.

It belongs to the adenylosuccinate synthetase family. Homodimer. Requires Mg(2+) as cofactor.

The protein localises to the cytoplasm. The catalysed reaction is IMP + L-aspartate + GTP = N(6)-(1,2-dicarboxyethyl)-AMP + GDP + phosphate + 2 H(+). It participates in purine metabolism; AMP biosynthesis via de novo pathway; AMP from IMP: step 1/2. In terms of biological role, plays an important role in the de novo pathway of purine nucleotide biosynthesis. Catalyzes the first committed step in the biosynthesis of AMP from IMP. The chain is Adenylosuccinate synthetase from Ectopseudomonas mendocina (strain ymp) (Pseudomonas mendocina).